Consider the following 291-residue polypeptide: 4-hydroxy-tetrahydrodipicolinate synthase (291 aa).

Thr-44 is a pyruvate binding site. The Proton donor/acceptor role is filled by Tyr-132. Residue Lys-160 is the Schiff-base intermediate with substrate of the active site. Ile-202 contributes to the pyruvate binding site.

It belongs to the DapA family. In terms of assembly, homotetramer; dimer of dimers.

It localises to the cytoplasm. The catalysed reaction is L-aspartate 4-semialdehyde + pyruvate = (2S,4S)-4-hydroxy-2,3,4,5-tetrahydrodipicolinate + H2O + H(+). Its pathway is amino-acid biosynthesis; L-lysine biosynthesis via DAP pathway; (S)-tetrahydrodipicolinate from L-aspartate: step 3/4. Its function is as follows. Catalyzes the condensation of (S)-aspartate-beta-semialdehyde [(S)-ASA] and pyruvate to 4-hydroxy-tetrahydrodipicolinate (HTPA). This is 4-hydroxy-tetrahydrodipicolinate synthase from Rhizorhabdus wittichii (strain DSM 6014 / CCUG 31198 / JCM 15750 / NBRC 105917 / EY 4224 / RW1) (Sphingomonas wittichii).